A 440-amino-acid chain; its full sequence is Damage-control phosphatase ARMT1 (440 aa).

Residues D252 and N253 each coordinate Mn(2+). Residue 252 to 253 (DN) participates in substrate binding. 2 residues coordinate S-adenosyl-L-methionine: E257 and D290. Position 290 (D290) interacts with Mn(2+). Residues 366-370 (DLNYR) and K403 each bind substrate. The short motif at 400–403 (RTLK) is the Subfamily III RTxK motif element.

It belongs to the damage-control phosphatase family. Sugar phosphate phosphatase III subfamily. Mn(2+) serves as cofactor. The cofactor is Ni(2+). Automethylated.

The enzyme catalyses beta-D-fructose 1-phosphate + H2O = D-fructose + phosphate. The catalysed reaction is beta-D-fructose 6-phosphate = dihydroxyacetone + D-glyceraldehyde 3-phosphate. It carries out the reaction L-glutamyl-[protein] + S-adenosyl-L-methionine = [protein]-L-glutamate 5-O-methyl ester + S-adenosyl-L-homocysteine. In terms of biological role, metal-dependent phosphatase that shows phosphatase activity against several substrates, including fructose-1-phosphate and fructose-6-phosphate. Its preference for fructose-1-phosphate, a strong glycating agent that causes DNA damage rather than a canonical yeast metabolite, suggests a damage-control function in hexose phosphate metabolism. Has also been shown to have O-methyltransferase activity that methylates glutamate residues of target proteins to form gamma-glutamyl methyl ester residues. Possibly methylates PCNA, suggesting it is involved in the DNA damage response. The polypeptide is Damage-control phosphatase ARMT1 (Xenopus laevis (African clawed frog)).